The primary structure comprises 724 residues: Membrane protein YdfJ (724 aa).

The next 12 membrane-spanning stretches (helical) occupy residues 17 to 37 (IKAICAWIVVLVAAIGLAVTL), 179 to 199 (IVGIILAFVVLAITFGSLLIA), 200 to 220 (GLPILTALIGLGVSIGLVLIG), 231 to 251 (LSLAGMIGLAVGIDYALFIFT), 277 to 297 (AVVFAGLTVIVALCGLTVVNI), 309 to 329 (LSVLMAVLASITLVPAVLSIA), 360 to 380 (IMLSVCSILILIVISIPSMHL), 512 to 532 (AIPVFAVLIVGFAFVLLTIVF), 539 to 559 (LVAVAGFMLTMTATLGICVFV), 575 to 595 (GPILAFLPILSIGILFGLAMD), 627 to 647 (PVVTAAGLIMIFVFAGFIFAG), and 655 to 675 (GLALSFGVLFDAFIVRMTLIP).

It belongs to the resistance-nodulation-cell division (RND) (TC 2.A.6) family. MmpL subfamily.

It localises to the cell membrane. This Bacillus subtilis (strain 168) protein is Membrane protein YdfJ (ydfJ).